We begin with the raw amino-acid sequence, 365 residues long: Protein AC54 (365 aa).

As to quaternary structure, interacts with C42 and VP80. Interacts with protein 38K.

It is found in the virion. Structural protein that participates in nucleocapsid assembly. Plays an essential role in the proper localization of the major capsid protein VP39, and the minor capsid protein 38K into the capsid assembly site. In Lepidoptera (butterflies and moths), this protein is Protein AC54 (AC54).